We begin with the raw amino-acid sequence, 390 residues long: MLSRKGIIPEEYVLTRLAEDPAEPRYRARERRARFVSKKGNCNVAHKNIREQGRFLQDVFTTLVDLKWTHTLLIFTMSFLCSWLLFAMVWWLIAFAHGDLAPGEGAAVPCVTSIHSFSSAFLFSIEVQVTIGFGGRMVTEECPLAILILIVQNIVGLMINAIMLGCIFMKTAQAHRRAETLIFSKHAVIALRQGRLCFMLRVGDLRKSMIISATIHMQVVRKTTSPEGEVVPLHQVDIPMENGVGGNSIFLVAPLIIHHVIDANSPLYDLAPSDLHHHQDLEIIVILEGVVETTGITTQARTSYLADEILWGQRFVPIVAEEDGRYSVDYSKFGNTVKVPTPLCTARQLDEDRSLLDALTLTSARGPLRKRSVPVAKAKPKFSISPDSLS.

Over 1–65 (MLSRKGIIPE…LQDVFTTLVD (65 aa)) the chain is Cytoplasmic. Positions 48 and 50 each coordinate ATP. Residues 66–92 (LKWTHTLLIFTMSFLCSWLLFAMVWWL) form a helical membrane-spanning segment. Topologically, residues 93–116 (IAFAHGDLAPGEGAAVPCVTSIHS) are extracellular. A disulfide bridge connects residues Cys-110 and Cys-142. The segment at residues 117 to 133 (FSSAFLFSIEVQVTIGF) is an intramembrane region (discontinuously helical; Pore-forming). 2 residues coordinate K(+): Thr-130 and Phe-133. A Selectivity filter motif is present at residues 130–135 (TIGFGG). Residues 134–142 (GGRMVTEEC) are Extracellular-facing. Residues 143-171 (PLAILILIVQNIVGLMINAIMLGCIFMKT) form a helical membrane-spanning segment. Over 172–390 (AQAHRRAETL…KFSISPDSLS (219 aa)) the chain is Cytoplasmic. Arg-176 serves as a coordination point for a 1,2-diacyl-sn-glycero-3-phospho-(1D-myo-inositol-4,5-bisphosphate). Tyr-330 is a binding site for ATP. A Phosphothreonine; by MAPK1 modification is found at Thr-341. Residue Ser-385 is modified to Phosphoserine; by MAPK1.

The protein belongs to the inward rectifier-type potassium channel (TC 1.A.2.1) family. KCNJ11 subfamily. In terms of assembly, homotetramer; the homotetramer binds four ATP molecules (one ATP per subunit). Forms an heterooctamer with ABCC8/SUR1; one KCNJ11 homotetramer interacts with four ABCC8/SUR1 molecules. Interacts with ABCC9/SUR2. Phosphorylation by MAPK1 results in changes in channel gating that destabilize the closed states and reduce the ATP sensitivity.

Its subcellular location is the membrane. It carries out the reaction K(+)(in) = K(+)(out). KATP channels are regulated by cytoplasmic ATP/ADP ratios; ATP inhibits the channel by closing the pore, while ADP activates the channel. Activated by phosphatidylinositol 4,5-biphosphate (PtdIns(4,5)P2). Inward rectifier potassium channel that forms the pore of ATP-sensitive potassium channels (KATP), regulating potassium permeability as a function of cytoplasmic ATP and ADP concentrations in many different cells. Inward rectifier potassium channels are characterized by a greater tendency to allow potassium to flow into the cell rather than out of it. Their voltage dependence is regulated by the concentration of extracellular potassium; as external potassium is raised, the voltage range of the channel opening shifts to more positive voltages. The inward rectification is mainly due to the blockage of outward current by internal magnesium. Can be blocked by extracellular barium. In pancreatic cells, it forms KATP channels with ABCC8/SUR1. Can form cardiac and smooth muscle-type KATP channels with ABCC9. The chain is ATP-sensitive inward rectifier potassium channel 11 (KCNJ11) from Oryctolagus cuniculus (Rabbit).